The chain runs to 701 residues: Polyphosphate kinase (701 aa).

N45 serves as a coordination point for ATP. Mg(2+) contacts are provided by R373 and R403. Residues 428–462 (PGMKIHAKLLLITRKEGDEFVRYAHIGTGNFHERT) enclose the PLD phosphodiesterase 1 domain. The active-site Phosphohistidine intermediate is the H433. ATP is bound by residues Y466, R562, and H590. One can recognise a PLD phosphodiesterase 2 domain in the interval 585 to 615 (DRFLEHPRVLVVHNDGNPQVFISSADWMERN).

It belongs to the polyphosphate kinase 1 (PPK1) family. Mg(2+) is required as a cofactor. In terms of processing, an intermediate of this reaction is the autophosphorylated ppk in which a phosphate is covalently linked to a histidine residue through a N-P bond.

It carries out the reaction [phosphate](n) + ATP = [phosphate](n+1) + ADP. Catalyzes the reversible transfer of the terminal phosphate of ATP to form a long-chain polyphosphate (polyP). The polypeptide is Polyphosphate kinase (Vibrio cholerae serotype O1 (strain ATCC 39315 / El Tor Inaba N16961)).